The sequence spans 296 residues: Remorin 4.1 (296 aa).

Disordered regions lie at residues 1–78 (MLTL…SGEN), 121–142 (TRIG…DSNP), and 242–266 (EKTQ…EGKR). The span at 21–39 (ASDRRDETPSSEIVVRDIH) shows a compositional bias: basic and acidic residues. Composition is skewed to polar residues over residues 41–53 (MTTT…PQQR) and 62–78 (PSRS…SGEN). 2 stretches are compositionally biased toward basic and acidic residues: residues 121–135 (TRIG…HGQV) and 253–266 (RKAE…EGKR). Residues 226 to 261 (MKKIERKLEDRRAKAMEKTQNKVAKAQRKAEERRAT) adopt a coiled-coil conformation.

It belongs to the remorin family. Forms homodimer and heterodimer with REM4.2. Interacts with KIN11. Phosphorylated by KIN11. Post-translationally, probably ubiquitinated and degraded by the 26S proteasome pathway. As to expression, predominantly detected in bud, stem, root, flower, silique, and leaves, and enhanced dramatically in senescence leaf.

The protein localises to the cell membrane. Functionally, collaborates with REM4.2 to positively regulate the BCTV and BSCTV susceptibility. The chain is Remorin 4.1 from Arabidopsis thaliana (Mouse-ear cress).